The sequence spans 728 residues: Probable ubiquitin-conjugating enzyme protein 17 (728 aa).

The segment covering 1–17 (MSSQASQRSSSTSAVAQ) has biased composition (low complexity). Disordered stretches follow at residues 1-23 (MSSQ…RERR) and 123-155 (SSRS…GSTR). Positions 402 to 568 (DRTKRIAKEL…IEHATLNYAI (167 aa)) constitute a UBC core domain. Catalysis depends on C495, which acts as the Glycyl thioester intermediate. Disordered regions lie at residues 649-678 (PFAK…EAAA) and 709-728 (RTQP…STSS). Residues 658–678 (SERLKREQSEKEEKQKKEAAA) are compositionally biased toward basic and acidic residues. Over residues 710–728 (TQPTGDYSVPSVNEPSTSS) the composition is skewed to polar residues.

Belongs to the ubiquitin-conjugating enzyme family.

The chain is Probable ubiquitin-conjugating enzyme protein 17 (ubc-17) from Caenorhabditis elegans.